A 457-amino-acid chain; its full sequence is Bifunctional F420 biosynthesis protein FbiB (457 aa).

Positions 1–253 (MTSSDSHRSA…NGPDDLFWLG (253 aa)) are coenzyme F420:L-glutamate ligase. Residues 29 to 32 (LPEF), Ser59, and Lys64 each bind GTP. Residue Asp118 coordinates a divalent metal cation. Asn121 contacts GTP. The a divalent metal cation site is built by Asp159 and Thr160. Residues 254–457 (TTEALELGRQ…VRVADLLLRK (204 aa)) are dehydro-coenzyme F420-0 reductase. Residues 269 to 273 (RRSVR) and Ala297 each bind FMN. Residue Asp329 coordinates coenzyme F420-(gamma-Glu)n. FMN contacts are provided by Gly408 and Arg445.

In the N-terminal section; belongs to the CofE family. Requires Mg(2+) as cofactor. It depends on Mn(2+) as a cofactor. K(+) is required as a cofactor.

The enzyme catalyses oxidized coenzyme F420-0 + GTP + L-glutamate = oxidized coenzyme F420-1 + GDP + phosphate + H(+). It catalyses the reaction oxidized coenzyme F420-1 + GTP + L-glutamate = oxidized coenzyme F420-2 + GDP + phosphate + H(+). The catalysed reaction is oxidized coenzyme F420-(gamma-L-Glu)(n) + GTP + L-glutamate = oxidized coenzyme F420-(gamma-L-Glu)(n+1) + GDP + phosphate + H(+). It carries out the reaction oxidized coenzyme F420-0 + FMN + H(+) = dehydro coenzyme F420-0 + FMNH2. Its pathway is cofactor biosynthesis; coenzyme F420 biosynthesis. Functionally, bifunctional enzyme that catalyzes the GTP-dependent successive addition of multiple gamma-linked L-glutamates to the L-lactyl phosphodiester of 7,8-didemethyl-8-hydroxy-5-deazariboflavin (F420-0) to form polyglutamated F420 derivatives, and the FMNH2-dependent reduction of dehydro-F420-0 to form F420-0. This Mycobacterium leprae (strain TN) protein is Bifunctional F420 biosynthesis protein FbiB.